Here is a 258-residue protein sequence, read N- to C-terminus: Thiazole synthase (258 aa).

Lysine 96 acts as the Schiff-base intermediate with DXP in catalysis. Residues glycine 157, 183-184 (AG), and 205-206 (NT) contribute to the 1-deoxy-D-xylulose 5-phosphate site.

This sequence belongs to the ThiG family. Homotetramer. Forms heterodimers with either ThiH or ThiS.

The protein localises to the cytoplasm. The enzyme catalyses [ThiS sulfur-carrier protein]-C-terminal-Gly-aminoethanethioate + 2-iminoacetate + 1-deoxy-D-xylulose 5-phosphate = [ThiS sulfur-carrier protein]-C-terminal Gly-Gly + 2-[(2R,5Z)-2-carboxy-4-methylthiazol-5(2H)-ylidene]ethyl phosphate + 2 H2O + H(+). It functions in the pathway cofactor biosynthesis; thiamine diphosphate biosynthesis. In terms of biological role, catalyzes the rearrangement of 1-deoxy-D-xylulose 5-phosphate (DXP) to produce the thiazole phosphate moiety of thiamine. Sulfur is provided by the thiocarboxylate moiety of the carrier protein ThiS. In vitro, sulfur can be provided by H(2)S. This is Thiazole synthase from Alkaliphilus metalliredigens (strain QYMF).